A 343-amino-acid chain; its full sequence is Lipopolysaccharide core biosynthesis glycosyltransferase LpsD (343 aa).

It belongs to the glycosyltransferase group 1 family. Glycosyltransferase 4 subfamily.

Its pathway is bacterial outer membrane biogenesis; LPS core biosynthesis. This is Lipopolysaccharide core biosynthesis glycosyltransferase LpsD (lpsD) from Rhizobium meliloti (strain 1021) (Ensifer meliloti).